The primary structure comprises 298 residues: uncharacterized protein (298 aa).

10 consecutive transmembrane segments (helical) span residues Gly-9–Lys-28, Ile-38–Pro-60, Arg-72–Val-94, Leu-104–Leu-121, Leu-128–Trp-145, Leu-150–Ile-167, Ala-174–Phe-196, Pro-211–Ala-233, Ala-240–Gly-262, and Ala-272–Leu-291. An EamA domain is found at Val-18–Ala-141.

This sequence belongs to the EamA transporter family.

The protein resides in the cell membrane. This is an uncharacterized protein from Pseudomonas aeruginosa (strain ATCC 15692 / DSM 22644 / CIP 104116 / JCM 14847 / LMG 12228 / 1C / PRS 101 / PAO1).